Reading from the N-terminus, the 316-residue chain is Ribosomal RNA small subunit methyltransferase H (316 aa).

Residues 35 to 37 (SGH), D55, F84, D105, and Q112 each bind S-adenosyl-L-methionine.

The protein belongs to the methyltransferase superfamily. RsmH family.

The protein resides in the cytoplasm. It carries out the reaction cytidine(1402) in 16S rRNA + S-adenosyl-L-methionine = N(4)-methylcytidine(1402) in 16S rRNA + S-adenosyl-L-homocysteine + H(+). In terms of biological role, specifically methylates the N4 position of cytidine in position 1402 (C1402) of 16S rRNA. The sequence is that of Ribosomal RNA small subunit methyltransferase H from Streptococcus dysgalactiae subsp. equisimilis (strain GGS_124).